The chain runs to 960 residues: Dynamin-like GTPase OPA1, mitochondrial (960 aa).

Residues 1 to 87 (MWRAGRAALA…TKYGYQPRRN (87 aa)) constitute a mitochondrion transit peptide. Residues 88 to 96 (FWPARLAAR) lie on the Mitochondrial matrix side of the membrane. The helical transmembrane segment at 97 to 113 (LLKLRYIILGSAVGGGY) threads the bilayer. Over 114–770 (TAKKTFDEWK…NAIENMIGPD (657 aa)) the chain is Mitochondrial intermembrane. Residues 210–254 (SDKEKIDQLQEELLHTQLKYQRILERLEKENKELRKLVLQKDDKG) are a coiled coil. The LQQQIQ motif motif lies at 217 to 222 (QLQEEL). The residue at position 228 (lysine 228) is an N6-acetyllysine. The LQQQIQ motif signature appears at 234-239 (ERLEKE). In terms of domain architecture, Dynamin-type G spans 285–561 (QDHLPRVVVV…FWKMVRESVE (277 aa)). The segment at 295–302 (GDQSAGKT) is G1 motif. The GTP site is built by serine 298, glycine 300, lysine 301, threonine 302, serine 303, and glycine 317. Threonine 302 is a binding site for Mg(2+). Residues 321 to 324 (MMTR) are G2 motif. Mg(2+) contacts are provided by threonine 323 and aspartate 398. A G3 motif region spans residues 398 to 401 (DLPG). The G4 motif stretch occupies residues 467–470 (TKVD). GTP is bound by residues lysine 468, aspartate 470, and threonine 503. The tract at residues 501–504 (VVTG) is G5 motif. Stalk region regions lie at residues 589 to 836 (DRNE…IKDT) and 874 to 928 (CNDV…VKLL). Residues 736–856 (SDKQQWDAAI…KTALNHCNLC (121 aa)) form a paddle region region. The stretch at 771–781 (WKKRWIYWKNR) is an intramembrane region. Residues 782-960 (TQEQCVHNET…AFIEALHQEK (179 aa)) are Mitochondrial intermembrane-facing. Cysteine 856 and cysteine 874 are oxidised to a cystine. Residues 895 to 960 (RQQLTNTEVR…AFIEALHQEK (66 aa)) are a coiled coil.

The protein belongs to the TRAFAC class dynamin-like GTPase superfamily. Dynamin/Fzo/YdjA family. As to quaternary structure, oligomeric complex consisting of membrane-bound and soluble forms of OPA1. Interacts with RCC1L; RCC1L acts as a guanine nucleotide exchange factor (GEF) for OPA1 by exchanging bound GDP for free GTP. Interacts with CHCHD3 and IMMT; these interactions occur preferentially with soluble OPA1 forms. Interacts with PRELID1. Cleaved by OMA1 or YME1L downstream of the transmembrane region in response to different signals to generate soluble forms. Cleaved by OMA1 at position S1 following stress conditions, generating the short soluble form (Dynamin-like GTPase OPA1, short form; S-OPA1). AFG3L2 is involved in the regulation of OMA1-dependent processing of OPA1. PARL-dependent proteolytic processing releases an antiapoptotic soluble form not required for mitochondrial fusion. In terms of processing, cleavage at position S2 by YME1L is required to mediate oxidative phosphorylation (OXPHOS)-induced mitochondrial fusion. Cleavage occurs in the sequence motif Leu-Gln-Gln-Gln-Ile-Gln (LQQQIQ). In terms of tissue distribution, expressed in brain as well as retinal ganglion, starbust amacrine and horizontal cells of the retina. Absent from nerve fibers and photoreceptor cells of the retina.

It localises to the mitochondrion inner membrane. The protein localises to the mitochondrion intermembrane space. It carries out the reaction GTP + H2O = GDP + phosphate + H(+). With respect to regulation, activated by guanine nucleotide exchange factor RCC1L. Its function is as follows. Dynamin-related GTPase that is essential for normal mitochondrial morphology by mediating fusion of the mitochondrial inner membranes, regulating cristae morphology and maintaining respiratory chain function. Exists in two forms: the transmembrane, long form (Dynamin-like GTPase OPA1, long form; L-OPA1), which is tethered to the inner mitochondrial membrane, and the short soluble form (Dynamin-like GTPase OPA1, short form; S-OPA1), which results from proteolytic cleavage and localizes in the intermembrane space. Both forms (L-OPA1 and S-OPA1) cooperate to catalyze the fusion of the mitochondrial inner membrane. The equilibrium between L-OPA1 and S-OPA1 is essential: excess levels of S-OPA1, produced by cleavage by OMA1 following loss of mitochondrial membrane potential, lead to an impaired equilibrium between L-OPA1 and S-OPA1, inhibiting mitochondrial fusion. The balance between L-OPA1 and S-OPA1 also influences cristae shape and morphology. Involved in remodeling cristae and the release of cytochrome c during apoptosis. Proteolytic processing by PARL in response to intrinsic apoptotic signals may lead to disassembly of OPA1 oligomers and release of the caspase activator cytochrome C (CYCS) into the mitochondrial intermembrane space. Acts as a regulator of T-helper Th17 cells, which are characterized by cells with fused mitochondria with tight cristae, by mediating mitochondrial membrane remodeling: OPA1 is required for interleukin-17 (IL-17) production. Its role in mitochondrial morphology is required for mitochondrial genome maintenance. In terms of biological role, constitutes the transmembrane long form (L-OPA1) that plays a central role in mitochondrial inner membrane fusion and cristae morphology. L-OPA1 and the soluble short form (S-OPA1) form higher-order helical assemblies that coordinate the fusion of mitochondrial inner membranes. Inner membrane-anchored L-OPA1 molecules initiate membrane remodeling by recruiting soluble S-OPA1 to rapidly polymerize into a flexible cylindrical scaffold encaging the mitochondrial inner membrane. Once at the membrane surface, the formation of S-OPA1 helices induce bilayer curvature. OPA1 dimerization through the paddle region, which inserts into cardiolipin-containing membrane, promotes GTP hydrolysis and the helical assembly of a flexible OPA1 lattice on the membrane, which drives membrane curvature and mitochondrial fusion. Plays a role in the maintenance and remodeling of mitochondrial cristae, some invaginations of the mitochondrial inner membrane that provide an increase in the surface area. Probably acts by forming helical filaments at the inside of inner membrane tubes with the shape and dimensions of crista junctions. The equilibrium between L-OPA1 and S-OPA1 influences cristae shape and morphology: increased L-OPA1 levels promote cristae stacking and elongated mitochondria, while increased S-OPA1 levels correlated with irregular cristae packing and round mitochondria shape. Constitutes the soluble short form (S-OPA1) generated by cleavage by OMA1, which plays a central role in mitochondrial inner membrane fusion and cristae morphology. The transmembrane long form (L-OPA1) and the S-OPA1 form higher-order helical assemblies that coordinate the fusion of mitochondrial inner membranes. Inner membrane-anchored L-OPA1 molecules initiate membrane remodeling by recruiting soluble S-OPA1 to rapidly polymerize into a flexible cylindrical scaffold encaging the mitochondrial inner membrane. Once at the membrane surface, the formation of S-OPA1 helices induce bilayer curvature. OPA1 dimerization through the paddle region, which inserts into cardiolipin-containing membrane, promotes GTP hydrolysis and the helical assembly of a flexible OPA1 lattice on the membrane, which drives membrane curvature and mitochondrial fusion. Excess levels of S-OPA1 produced by cleavage by OMA1 following stress conditions that induce loss of mitochondrial membrane potential, lead to an impaired equilibrium between L-OPA1 and S-OPA1, thereby inhibiting mitochondrial fusion. Involved in mitochondrial safeguard in response to transient mitochondrial membrane depolarization by mediating flickering: cleavage by OMA1 leads to excess production of S-OPA1, preventing mitochondrial hyperfusion. Plays a role in the maintenance and remodeling of mitochondrial cristae, some invaginations of the mitochondrial inner membrane that provide an increase in the surface area. Probably acts by forming helical filaments at the inside of inner membrane tubes with the shape and dimensions of crista junctions. The equilibrium between L-OPA1 and S-OPA1 influences cristae shape and morphology: increased L-OPA1 levels promote cristae stacking and elongated mitochondria, while increased S-OPA1 levels correlated with irregular cristae packing and round mitochondria shape. Functionally, isoforms that contain the alternative exon 4b are required for mitochondrial genome maintenance, possibly by anchoring the mitochondrial nucleoids to the inner mitochondrial membrane. The chain is Dynamin-like GTPase OPA1, mitochondrial from Rattus norvegicus (Rat).